Reading from the N-terminus, the 134-residue chain is uncharacterized protein (134 aa).

The interval methionine 1 to glutamate 30 is disordered. Basic and acidic residues predominate over residues arginine 10–glutamate 30.

This is an uncharacterized protein from Homo sapiens (Human).